The following is a 316-amino-acid chain: Beta-ketoacyl-[acyl-carrier-protein] synthase III (316 aa).

Catalysis depends on residues C112 and H243. The tract at residues 244-248 (QANLR) is ACP-binding. N273 is a catalytic residue.

Belongs to the thiolase-like superfamily. FabH family. In terms of assembly, homodimer.

The protein resides in the cytoplasm. The catalysed reaction is malonyl-[ACP] + acetyl-CoA + H(+) = 3-oxobutanoyl-[ACP] + CO2 + CoA. Its pathway is lipid metabolism; fatty acid biosynthesis. Catalyzes the condensation reaction of fatty acid synthesis by the addition to an acyl acceptor of two carbons from malonyl-ACP. Catalyzes the first condensation reaction which initiates fatty acid synthesis and may therefore play a role in governing the total rate of fatty acid production. Possesses both acetoacetyl-ACP synthase and acetyl transacylase activities. Its substrate specificity determines the biosynthesis of branched-chain and/or straight-chain of fatty acids. In Actinobacillus succinogenes (strain ATCC 55618 / DSM 22257 / CCUG 43843 / 130Z), this protein is Beta-ketoacyl-[acyl-carrier-protein] synthase III.